The following is a 214-amino-acid chain: tRNA (guanine-N(7)-)-methyltransferase (214 aa).

S-adenosyl-L-methionine-binding residues include E44, E69, D96, and D118. The active site involves D118. Substrate-binding positions include K122, D154, and 191 to 194; that span reads TEYE.

This sequence belongs to the class I-like SAM-binding methyltransferase superfamily. TrmB family.

The enzyme catalyses guanosine(46) in tRNA + S-adenosyl-L-methionine = N(7)-methylguanosine(46) in tRNA + S-adenosyl-L-homocysteine. Its pathway is tRNA modification; N(7)-methylguanine-tRNA biosynthesis. Its function is as follows. Catalyzes the formation of N(7)-methylguanine at position 46 (m7G46) in tRNA. The sequence is that of tRNA (guanine-N(7)-)-methyltransferase from Listeria monocytogenes serovar 1/2a (strain ATCC BAA-679 / EGD-e).